We begin with the raw amino-acid sequence, 170 residues long: MDTMVDFKTLPYRKGVGIVVFNREGQVWIGRRLITSSHTYAEVSKLWQFPQGGIDEGEEPLDAARRELYEETGMRSVNLIKEVQDWFCYDFPQELIGHVLNNQYRGQMQKWFAFQFIGETSEIVINSPENSNKAEFDQWKWINLEVLPSIVVSFKRHVYMKVVHEFRNII.

Residues 11-164 form the Nudix hydrolase domain; it reads PYRKGVGIVV…KRHVYMKVVH (154 aa). A Nudix box motif is present at residues 52 to 73; the sequence is GGIDEGEEPLDAARRELYEETG.

It belongs to the Nudix hydrolase family. RppH subfamily. In terms of assembly, monomer. Zn(2+) serves as cofactor. It depends on Mg(2+) as a cofactor. The cofactor is Mn(2+).

Accelerates the degradation of transcripts by removing pyrophosphate from the 5'-end of triphosphorylated RNA, leading to a more labile monophosphorylated state that can stimulate subsequent ribonuclease cleavage. Catalyzes the hydrolysis of diadenosine tetra-, penta-, or hexa-phosphate with the departure of ATP as leaving group. Preferred substrate is Ap4A. Also acts on diguanosine tetra- and penta-phosphate at a lesser extent. Required with IalB for erythrocytes invasion. This Bartonella bacilliformis (strain ATCC 35685 / KC583 / Herrer 020/F12,63) protein is RNA pyrophosphohydrolase (rppH).